A 161-amino-acid chain; its full sequence is Regulator of ribonuclease activity A (161 aa).

It belongs to the RraA family. Homotrimer. Binds to both RNA-binding sites in the C-terminal region of Rne and to RhlB.

The protein localises to the cytoplasm. In terms of biological role, globally modulates RNA abundance by binding to RNase E (Rne) and regulating its endonucleolytic activity. Can modulate Rne action in a substrate-dependent manner by altering the composition of the degradosome. Modulates RNA-binding and helicase activities of the degradosome. The sequence is that of Regulator of ribonuclease activity A from Salmonella choleraesuis (strain SC-B67).